Here is a 255-residue protein sequence, read N- to C-terminus: uncharacterized protein (255 aa).

The N-terminal stretch at 1-23 (MKRLNKLVLYISFLILVISFTAG) is a signal peptide. Cysteine 24 carries N-palmitoyl cysteine lipidation. Cysteine 24 is lipidated: S-diacylglycerol cysteine.

Belongs to the staphylococcal tandem lipoprotein family.

The protein localises to the cell membrane. This is an uncharacterized protein from Staphylococcus aureus (strain NCTC 8325 / PS 47).